We begin with the raw amino-acid sequence, 639 residues long: Protein phosphatase 2C 35 (639 aa).

The region spanning 227-630 is the PPM-type phosphatase domain; sequence GGDPCGLQWA…DDVSVIVISL (404 aa). Mn(2+)-binding residues include D262 and G263. The interval 295-341 is disordered; sequence QNVQHDQRPDQPGSAPSTTASDNQDQWGRRRRTRRSRPPRGADDDQR. Positions 308 to 320 are enriched in polar residues; it reads SAPSTTASDNQDQ. Positions 323-332 are enriched in basic residues; that stretch reads RRRRTRRSRP. Mn(2+)-binding residues include D558 and D621.

It belongs to the PP2C family. Interacts with XA21 (via juxtamembrane and kinase domains). The cofactor is Mg(2+). It depends on Mn(2+) as a cofactor.

The protein localises to the cell membrane. The catalysed reaction is O-phospho-L-seryl-[protein] + H2O = L-seryl-[protein] + phosphate. It carries out the reaction O-phospho-L-threonyl-[protein] + H2O = L-threonyl-[protein] + phosphate. In terms of biological role, protein phosphatase that acts on XA21 pathogen recognition receptor. Negatively regulates cell death and XA21-mediated innate immunity. This chain is Protein phosphatase 2C 35 (XB15), found in Oryza sativa subsp. japonica (Rice).